The following is a 256-amino-acid chain: Dihydroorotate dehydrogenase B (NAD(+)), electron transfer subunit (256 aa).

The FAD-binding FR-type domain maps to 2 to 100 (IRLETMKVVA…MGPQGNGFDL (99 aa)). FAD contacts are provided by residues 51-54 (RPIS), 68-70 (IYR), and 75-76 (GT). [2Fe-2S] cluster contacts are provided by C220, C225, C228, and C243.

It belongs to the PyrK family. Heterotetramer of 2 PyrK and 2 PyrD type B subunits. Requires [2Fe-2S] cluster as cofactor. FAD serves as cofactor.

Its pathway is pyrimidine metabolism; UMP biosynthesis via de novo pathway; orotate from (S)-dihydroorotate (NAD(+) route): step 1/1. Functionally, responsible for channeling the electrons from the oxidation of dihydroorotate from the FMN redox center in the PyrD type B subunit to the ultimate electron acceptor NAD(+). The polypeptide is Dihydroorotate dehydrogenase B (NAD(+)), electron transfer subunit (Streptococcus pneumoniae (strain ATCC BAA-255 / R6)).